Reading from the N-terminus, the 311-residue chain is tRNA dimethylallyltransferase (311 aa).

Residue 14 to 21 (GPTAVGKT) participates in ATP binding. Position 16–21 (16–21 (TAVGKT)) interacts with substrate. The interaction with substrate tRNA stretch occupies residues 39–42 (DSMQ).

The protein belongs to the IPP transferase family. Monomer. It depends on Mg(2+) as a cofactor.

The catalysed reaction is adenosine(37) in tRNA + dimethylallyl diphosphate = N(6)-dimethylallyladenosine(37) in tRNA + diphosphate. Functionally, catalyzes the transfer of a dimethylallyl group onto the adenine at position 37 in tRNAs that read codons beginning with uridine, leading to the formation of N6-(dimethylallyl)adenosine (i(6)A). The protein is tRNA dimethylallyltransferase of Lactiplantibacillus plantarum (strain ATCC BAA-793 / NCIMB 8826 / WCFS1) (Lactobacillus plantarum).